Consider the following 398-residue polypeptide: Succinate--CoA ligase [ADP-forming] subunit beta (398 aa).

Residues 9-254 (KAVLREFGVS…ETEEDAKEIE (246 aa)) form the ATP-grasp domain. Residues K46, 53–55 (GRG), E109, A112, and E117 each bind ATP. Mg(2+)-binding residues include N209 and D223. Substrate is bound by residues N274 and 331 to 333 (GIM).

This sequence belongs to the succinate/malate CoA ligase beta subunit family. Heterotetramer of two alpha and two beta subunits. Mg(2+) is required as a cofactor.

The enzyme catalyses succinate + ATP + CoA = succinyl-CoA + ADP + phosphate. The catalysed reaction is GTP + succinate + CoA = succinyl-CoA + GDP + phosphate. The protein operates within carbohydrate metabolism; tricarboxylic acid cycle; succinate from succinyl-CoA (ligase route): step 1/1. In terms of biological role, succinyl-CoA synthetase functions in the citric acid cycle (TCA), coupling the hydrolysis of succinyl-CoA to the synthesis of either ATP or GTP and thus represents the only step of substrate-level phosphorylation in the TCA. The beta subunit provides nucleotide specificity of the enzyme and binds the substrate succinate, while the binding sites for coenzyme A and phosphate are found in the alpha subunit. The protein is Succinate--CoA ligase [ADP-forming] subunit beta of Afipia carboxidovorans (strain ATCC 49405 / DSM 1227 / KCTC 32145 / OM5) (Oligotropha carboxidovorans).